Reading from the N-terminus, the 368-residue chain is MELDECLERLYKAQLLPEVTVRALCFKLKEMLVKESNVIHIQTPVTVVGDMHGQFHDMLEIFQIGGPVPDTNYLFLGDYVDRGLYSVETIMLLIVLKLRYPSRIHLLRGNHESRQITQSYGFYTECLNKYGGNSRVWQYLTDIFDYLVLCCIIDDEIFCVHGGLSPNVQTIDQIKIIDRFREIPHDGAMADLVWSDPEENNNPTLDHPDNSGQHFQVSPRGAGYTFGRSVVEKFLRMNDMNRIYRAHQLCNEGYQIYFDGLVTTVWSAPNYCYRCGNKASILELYSKDQFYFNVFEEAPENKLLKENSMNDNALEDSISNPVANRKLIADYFEDDSASADGSTDPEMYIFSDVYQARSASNRHVDYFL.

Mn(2+)-binding residues include aspartate 50, histidine 52, aspartate 78, and asparagine 110. Residue histidine 111 is the Proton donor of the active site. Positions 161 and 247 each coordinate Mn(2+).

Belongs to the PPP phosphatase family. PP-2A subfamily. As to quaternary structure, inactivated in a complex with phosphatase methylesterase PPE1 (PP2Ai). Interacts with phosphatase 2A activator RRD1, which can reactivate PP2Ai by dissociating the catalytic subunit from the complex. Interacts with TAP42. The cofactor is Mn(2+). Reversibly methyl esterified on Leu-368 by leucine carboxyl methyltransferase 1 (PPM1) and protein phosphatase methylesterase 1 (PPE1). Carboxyl methylation influences the affinity of the catalytic subunit for the different regulatory subunits, thereby modulating the PP2A holoenzyme's substrate specificity, enzyme activity and cellular localization.

The catalysed reaction is O-phospho-L-seryl-[protein] + H2O = L-seryl-[protein] + phosphate. The enzyme catalyses O-phospho-L-threonyl-[protein] + H2O = L-threonyl-[protein] + phosphate. Involved in glycogen accumulation. The polypeptide is Serine/threonine-protein phosphatase PP2A-like PPG1 (PPG1) (Saccharomyces cerevisiae (strain ATCC 204508 / S288c) (Baker's yeast)).